Reading from the N-terminus, the 363-residue chain is S-adenosylmethionine decarboxylase proenzyme (363 aa).

Residues glutamate 9 and glutamate 12 contribute to the active site. Residue serine 69 is the Schiff-base intermediate with substrate; via pyruvic acid of the active site. Serine 69 bears the Pyruvic acid (Ser); by autocatalysis mark. Cysteine 83 acts as the Proton donor; for catalytic activity in catalysis. Active-site proton acceptor; for processing activity residues include serine 232 and histidine 245.

The protein belongs to the eukaryotic AdoMetDC family. Requires pyruvate as cofactor. Post-translationally, is synthesized initially as an inactive proenzyme. Formation of the active enzyme involves a self-maturation process in which the active site pyruvoyl group is generated from an internal serine residue via an autocatalytic post-translational modification. Two non-identical subunits are generated from the proenzyme in this reaction, and the pyruvate is formed at the N-terminus of the alpha chain, which is derived from the carboxyl end of the proenzyme. The post-translation cleavage follows an unusual pathway, termed non-hydrolytic serinolysis, in which the side chain hydroxyl group of the serine supplies its oxygen atom to form the C-terminus of the beta chain, while the remainder of the serine residue undergoes an oxidative deamination to produce ammonia and the pyruvoyl group blocking the N-terminus of the alpha chain.

The catalysed reaction is S-adenosyl-L-methionine + H(+) = S-adenosyl 3-(methylsulfanyl)propylamine + CO2. The protein operates within amine and polyamine biosynthesis; S-adenosylmethioninamine biosynthesis; S-adenosylmethioninamine from S-adenosyl-L-methionine: step 1/1. The sequence is that of S-adenosylmethionine decarboxylase proenzyme (SAMDC) from Spinacia oleracea (Spinach).